The following is an 884-amino-acid chain: DNA mismatch repair protein MutS (884 aa).

An ATP-binding site is contributed by 601-608 (GPNMSGKS). The segment at 826–845 (ESQLSFFGGEQSSKKQDKPL) is disordered.

The protein belongs to the DNA mismatch repair MutS family.

In terms of biological role, this protein is involved in the repair of mismatches in DNA. It is possible that it carries out the mismatch recognition step. This protein has a weak ATPase activity. In Bacillus cereus (strain ATCC 14579 / DSM 31 / CCUG 7414 / JCM 2152 / NBRC 15305 / NCIMB 9373 / NCTC 2599 / NRRL B-3711), this protein is DNA mismatch repair protein MutS.